The chain runs to 280 residues: Energy-coupling factor transporter ATP-binding protein EcfA2 (280 aa).

The 243-residue stretch at 3 to 245 (INLQNVSYTY…VSLLEKKQLG (243 aa)) folds into the ABC transporter domain. 40–47 (GHTGSGKS) contributes to the ATP binding site.

Belongs to the ABC transporter superfamily. Energy-coupling factor EcfA family. In terms of assembly, forms a stable energy-coupling factor (ECF) transporter complex composed of 2 membrane-embedded substrate-binding proteins (S component), 2 ATP-binding proteins (A component) and 2 transmembrane proteins (T component).

It is found in the cell membrane. ATP-binding (A) component of a common energy-coupling factor (ECF) ABC-transporter complex. Unlike classic ABC transporters this ECF transporter provides the energy necessary to transport a number of different substrates. This Streptococcus pyogenes serotype M3 (strain ATCC BAA-595 / MGAS315) protein is Energy-coupling factor transporter ATP-binding protein EcfA2.